The following is an 896-amino-acid chain: Histone-lysine N-methyltransferase CLF (896 aa).

2 disordered regions span residues 344 to 419 (DNLK…NRRI) and 459 to 514 (SGIK…DGCD). The span at 358 to 390 (GSSGQKTKSQQSESSSTARVSSESSESEVQLLS) shows a compositional bias: low complexity. Polar residues-rich tracts occupy residues 391-400 (NKSPQHSPGL), 465-476 (VVSSQCNSPSTR), and 485-498 (QMEN…AQSD). The segment covering 504 to 514 (NNEHSATDGCD) has biased composition (basic and acidic residues). Residues 633–732 (RKRITERKDQ…TLGVPNQRGD (100 aa)) form the CXC domain. The region spanning 747–862 (QRVLLGRSDV…AGEELFYDYR (116 aa)) is the SET domain. Y861 contributes to the S-adenosyl-L-methionine binding site. Over residues 869–884 (PAWARKPEGPGAKDDA) the composition is skewed to basic and acidic residues. A disordered region spans residues 869–896 (PAWARKPEGPGAKDDAQPSTGRAKKLAH).

This sequence belongs to the class V-like SAM-binding methyltransferase superfamily. Histone-lysine methyltransferase family. EZ subfamily. As to quaternary structure, interacts with FIE1. Component of the polycomb repressive complex 2 (PRC2), composed of the core PRC2 components FIE2, EMF2B and EZ1. PRC2 methylates 'Lys-27' residues of histone H3 (H3K27me3), leading to transcriptional repression of the affected target gene. Widely expressed. Highly expressed in young panicle.

The enzyme catalyses L-lysyl(27)-[histone H3] + 3 S-adenosyl-L-methionine = N(6),N(6),N(6)-trimethyl-L-lysyl(27)-[histone H3] + 3 S-adenosyl-L-homocysteine + 3 H(+). In terms of biological role, polycomb group (PcG) protein. Catalytic subunit of some PcG multiprotein complex, which methylates 'Lys-27' of histone H3, leading to transcriptional repression of the affected target genes. PcG proteins act by forming multiprotein complexes, which are required to maintain the transcriptionally repressive state of homeotic genes throughout development. PcG proteins are not required to initiate repression, but to maintain it during later stages of development. Involved in the regulation of flowering. Represses flowering under long day (LD) conditions. Regulates the trimethylation on histone H3 'Lys-27' (H3K27me3) of the flowering regulators MADS14, MADS15, RFT1, EHD1, HD3A and LF. The polypeptide is Histone-lysine N-methyltransferase CLF (Oryza sativa subsp. japonica (Rice)).